Reading from the N-terminus, the 185-residue chain is MIEETLLEAEEKMDKAVEVAKEDFASIRTGRANPGLYNRVLVDYYGSPTPLQQLASFAIPDARTILITPFDKTALRDIERALSDSEVGANPSNDGNVIRITIPELTKERRKEYVKIVKTKGEDAKVSIRNIRRKAKEALDRLVKDGEAGEDEGTRAEKELDGLTKAHVDGIDELLKRKEAELLEV.

This sequence belongs to the RRF family.

The protein resides in the cytoplasm. Its function is as follows. Responsible for the release of ribosomes from messenger RNA at the termination of protein biosynthesis. May increase the efficiency of translation by recycling ribosomes from one round of translation to another. This Pseudarthrobacter chlorophenolicus (strain ATCC 700700 / DSM 12829 / CIP 107037 / JCM 12360 / KCTC 9906 / NCIMB 13794 / A6) (Arthrobacter chlorophenolicus) protein is Ribosome-recycling factor.